Reading from the N-terminus, the 78-residue chain is Large ribosomal subunit protein bL28 (78 aa).

Residues 1–22 (MSRVCQVTGKRPMSGNNRSHAM) form a disordered region.

This sequence belongs to the bacterial ribosomal protein bL28 family.

This Yersinia pseudotuberculosis serotype O:1b (strain IP 31758) protein is Large ribosomal subunit protein bL28.